The sequence spans 171 residues: Odorant-binding protein 1b (171 aa).

Positions 1–19 (MMVKFLLLALVFGLAHVHA) are cleaved as a signal peptide. Disulfide bonds link Cys-57-Cys-61 and Cys-76-Cys-169.

It belongs to the calycin superfamily. Lipocalin family. In terms of assembly, may form a heterodimer with OBP1A. The N-terminus may be blocked. As to expression, expressed in nasal mucosa (at protein level). Specifically detected in septal and lateral nasal glands.

It is found in the secreted. Its function is as follows. Binds the chemical odorant 2-isobutyl-3-methoxypyrazine. The chain is Odorant-binding protein 1b from Mus musculus (Mouse).